The chain runs to 205 residues: Adenylyl-sulfate kinase (205 aa).

31 to 38 contacts ATP; that stretch reads GLSGAGKS. Residue Ser-105 is the Phosphoserine intermediate of the active site.

Belongs to the APS kinase family.

It catalyses the reaction adenosine 5'-phosphosulfate + ATP = 3'-phosphoadenylyl sulfate + ADP + H(+). It functions in the pathway sulfur metabolism; hydrogen sulfide biosynthesis; sulfite from sulfate: step 2/3. In terms of biological role, catalyzes the synthesis of activated sulfate. The chain is Adenylyl-sulfate kinase from Shewanella baltica (strain OS223).